The chain runs to 143 residues: Aspartate 1-decarboxylase (143 aa).

The active-site Schiff-base intermediate with substrate; via pyruvic acid is S25. S25 is modified (pyruvic acid (Ser)). T57 is a binding site for substrate. Y58 functions as the Proton donor in the catalytic mechanism. Substrate is bound at residue G73–A75.

It belongs to the PanD family. In terms of assembly, heterooctamer of four alpha and four beta subunits. The cofactor is pyruvate. Is synthesized initially as an inactive proenzyme, which is activated by self-cleavage at a specific serine bond to produce a beta-subunit with a hydroxyl group at its C-terminus and an alpha-subunit with a pyruvoyl group at its N-terminus.

Its subcellular location is the cytoplasm. The enzyme catalyses L-aspartate + H(+) = beta-alanine + CO2. Its pathway is cofactor biosynthesis; (R)-pantothenate biosynthesis; beta-alanine from L-aspartate: step 1/1. In terms of biological role, catalyzes the pyruvoyl-dependent decarboxylation of aspartate to produce beta-alanine. The sequence is that of Aspartate 1-decarboxylase from Mycobacterium ulcerans (strain Agy99).